The chain runs to 325 residues: tRNA pseudouridine synthase B (325 aa).

The Nucleophile role is filled by D49.

It belongs to the pseudouridine synthase TruB family. Type 1 subfamily.

The enzyme catalyses uridine(55) in tRNA = pseudouridine(55) in tRNA. In terms of biological role, responsible for synthesis of pseudouridine from uracil-55 in the psi GC loop of transfer RNAs. The protein is tRNA pseudouridine synthase B of Mesorhizobium japonicum (strain LMG 29417 / CECT 9101 / MAFF 303099) (Mesorhizobium loti (strain MAFF 303099)).